A 650-amino-acid polypeptide reads, in one-letter code: Aminopeptidase B (650 aa).

Position 2 is an N-acetylalanine (Ala2). The residue at position 7 (Ser7) is a Phosphoserine. A substrate-binding site is contributed by 298–302; it reads GGMEN. His325 is a binding site for Zn(2+). Residue Glu326 is the Proton acceptor of the active site. Zn(2+) is bound by residues His329 and Glu348. Lys446 carries the post-translational modification N6-acetyllysine.

It belongs to the peptidase M1 family. It depends on Zn(2+) as a cofactor.

It is found in the secreted. The catalysed reaction is Release of N-terminal Arg and Lys from oligopeptides when P1' is not Pro. Also acts on arylamides of Arg and Lys.. Exopeptidase which selectively removes arginine and/or lysine residues from the N-terminus of several peptide substrates including Arg(0)-Leu-enkephalin, Arg(0)-Met-enkephalin and Arg(-1)-Lys(0)-somatostatin-14. Can hydrolyze leukotriene A4 (LTA-4) into leukotriene B4 (LTB-4). The protein is Aminopeptidase B (RNPEP) of Homo sapiens (Human).